The primary structure comprises 375 residues: Outer membrane porin C (375 aa).

The N-terminal stretch at 1 to 21 is a signal peptide; that stretch reads MKVKVLSLLVPALLVAGAANA. Residues 22–27 form a beta stranded membrane-spanning segment; that stretch reads AEVYNK. Over 28 to 29 the chain is Periplasmic; the sequence is DG. The beta stranded transmembrane segment at 30–44 threads the bilayer; the sequence is NKLDLYGKVDGLHYF. Residues 45–50 lie on the Extracellular side of the membrane; that stretch reads SDDKSV. A beta stranded membrane pass occupies residues 51–66; it reads DGDQTYMRLGFKGETQ. The Periplasmic segment spans residues 67–70; that stretch reads VTDQ. The beta stranded transmembrane segment at 71-82 threads the bilayer; the sequence is LTGYGQWEYQIQ. At 83-91 the chain is on the extracellular side; it reads GNAPESENN. Residues 92 to 103 traverse the membrane as a beta stranded segment; it reads SWTRVAFAGLKF. Over 104-105 the chain is Periplasmic; the sequence is QD. A beta stranded transmembrane segment spans residues 106-113; that stretch reads IGSFDYGR. Topologically, residues 114-146 are extracellular; sequence NYGVVYDVTSWTDVLPEFGGDTYGSDNFMQQRG. Residues 147 to 156 form a beta stranded membrane-spanning segment; that stretch reads NGFATYRNTD. At 157–163 the chain is on the periplasmic side; sequence FFGLVDG. Residues 164–172 traverse the membrane as a beta stranded segment; that stretch reads LNFAVQYQG. The Extracellular portion of the chain corresponds to 173–201; that stretch reads QNGSVSGENDPDFTGHGITNNGRKALRQN. The beta stranded transmembrane segment at 202–212 threads the bilayer; it reads GDGVGGSITYD. The Periplasmic segment spans residues 213 to 215; that stretch reads YEG. A beta stranded transmembrane segment spans residues 216–226; it reads FGVGAAVSSSK. Residues 227 to 241 lie on the Extracellular side of the membrane; that stretch reads RTWDQNNTGLIGTGD. A beta stranded transmembrane segment spans residues 242 to 254; that stretch reads RAETYTGGLKYDA. Residues 255-256 are Periplasmic-facing; the sequence is NN. A beta stranded transmembrane segment spans residues 257 to 267; the sequence is IYLAAQYTQTY. The Extracellular segment spans residues 268–279; it reads NATRVGSLGWAN. Residues 280–292 traverse the membrane as a beta stranded segment; that stretch reads KAQNFEAVAQYQF. Residues 293–294 are Periplasmic-facing; sequence DF. Residues 295-309 traverse the membrane as a beta stranded segment; the sequence is GLRPSVAYLQSKGKN. Over 310 to 320 the chain is Extracellular; that stretch reads LGVVAGRNYDD. The beta stranded transmembrane segment at 321–335 threads the bilayer; it reads EDILKYVDVGATYYF. Topologically, residues 336-338 are periplasmic; sequence NKN. The beta stranded transmembrane segment at 339-348 threads the bilayer; that stretch reads MSTYVDYKIN. The Extracellular portion of the chain corresponds to 349–364; that stretch reads LLDDNQFTRAAGINTD. The chain crosses the membrane as a beta stranded span at residues 365-375; the sequence is DIVALGLVYQF.

The protein belongs to the Gram-negative porin family. In terms of assembly, homotrimer. Forms mixed heterotrimers with OmpF; other mixed heterotrimers are also probable. The N- and C-termini are two parts of the same strand. Extracellular loop 3 folds back into the lumen of the barrel forming a constriction zone that controls the pore size, while the trimer interface is formed by the packing of hydrophobic residues on the outer edges of beta strands 1 to 5 and further stabilized by extracellular loop 2 which reaches into the neighboring monomer.

It localises to the cell outer membrane. In terms of biological role, forms pores that allow passive diffusion of small molecules across the outer membrane, including some antibiotics. Variation of the residues in the constriction zone modifies the transverse electric field in the zone, altering antibiotic resistance. Functionally, (Microbial infection) Is not susceptible to CdiA-EC536-mediated toxicity, which uses OmpC-OmpF heterotrimers of some strains as its outer membrane receptor. Mutagenesis of extracellular loops L4 or L5 of this protein confers susceptibility to the toxin. The protein is Outer membrane porin C (ompC) of Escherichia coli O6:H1 (strain CFT073 / ATCC 700928 / UPEC).